Here is a 183-residue protein sequence, read N- to C-terminus: MGAFIGEIIALSMMALALGMDAFSVALGMGLLRLRLRQMFYIGLTIGLFHILMPLAGMAVGRLLSREFGSVATYAGGALLLWLGGQMIIASFRRDDGSPLFPRGVGLLFFAFSVSLDSFSVGLSLGIFGARTMVTILLFGLFSMVLTWVGLFVGRHFQQWLGSYSEALGGSILLAFGLKLLFL.

A run of 6 helical transmembrane segments spans residues 8 to 28 (IIALSMMALALGMDAFSVALG), 40 to 60 (FYIGLTIGLFHILMPLAGMAV), 72 to 92 (ATYAGGALLLWLGGQMIIASF), 108 to 128 (LFFAFSVSLDSFSVGLSLGIF), 133 to 153 (MVTILLFGLFSMVLTWVGLFV), and 163 to 183 (SYSEALGGSILLAFGLKLLFL).

This sequence belongs to the MntP (TC 9.B.29) family.

The protein resides in the cell membrane. In terms of biological role, probably functions as a manganese efflux pump. The sequence is that of Putative manganese efflux pump MntP from Geobacillus kaustophilus (strain HTA426).